A 309-amino-acid polypeptide reads, in one-letter code: MDKPAKRIVMIVGPTAVGKSDLGVYLAQQLHGEVINGDAYQIYRHMDIGTAKITPEEMQGVPHHLLDIADPTVAYSVAKFKKAATAMIDTVADRQQLPILVGGTGFYLNSLRLNLPLGGKAPPTAIRQRWQVALATNGQSWLWQQLAQRDPDAAQQIAPANTRRVIRALEVGELTGRRFSDQPQPAPLFSTLVIGLTTDRAVLYDRINARVDAMMQAGLLAEVEQLLKTVPADAQAMQAIGYKELVPYLHGQAELANCVALIKQHSRHFAKRQLTYFRNQMPTHWFDLVAHPEDKNAIVTLVQQWLKQR.

Position 13-20 (13-20 (GPTAVGKS)) interacts with ATP. Residue 15 to 20 (TAVGKS) coordinates substrate.

This sequence belongs to the IPP transferase family. Monomer. Mg(2+) serves as cofactor.

The catalysed reaction is adenosine(37) in tRNA + dimethylallyl diphosphate = N(6)-dimethylallyladenosine(37) in tRNA + diphosphate. In terms of biological role, catalyzes the transfer of a dimethylallyl group onto the adenine at position 37 in tRNAs that read codons beginning with uridine, leading to the formation of N6-(dimethylallyl)adenosine (i(6)A). The protein is tRNA dimethylallyltransferase of Lacticaseibacillus paracasei (strain ATCC 334 / BCRC 17002 / CCUG 31169 / CIP 107868 / KCTC 3260 / NRRL B-441) (Lactobacillus paracasei).